Reading from the N-terminus, the 652-residue chain is DNA ligase (652 aa).

NAD(+) contacts are provided by residues 29–33, 78–79, and Glu107; these read DSDYD and SL. Residue Lys109 is the N6-AMP-lysine intermediate of the active site. NAD(+) is bound by residues Arg130, Glu164, Lys278, and Lys302. 4 residues coordinate Zn(2+): Cys395, Cys398, Cys413, and Cys418. One can recognise a BRCT domain in the interval 577–652; the sequence is NSDAALFGLT…IEDEDWLRKL (76 aa).

Belongs to the NAD-dependent DNA ligase family. LigA subfamily. The cofactor is Mg(2+). Mn(2+) serves as cofactor.

The enzyme catalyses NAD(+) + (deoxyribonucleotide)n-3'-hydroxyl + 5'-phospho-(deoxyribonucleotide)m = (deoxyribonucleotide)n+m + AMP + beta-nicotinamide D-nucleotide.. Its function is as follows. DNA ligase that catalyzes the formation of phosphodiester linkages between 5'-phosphoryl and 3'-hydroxyl groups in double-stranded DNA using NAD as a coenzyme and as the energy source for the reaction. It is essential for DNA replication and repair of damaged DNA. In Streptococcus pyogenes serotype M18 (strain MGAS8232), this protein is DNA ligase.